Consider the following 399-residue polypeptide: Transmembrane protein 237 homolog (399 aa).

Residues Met-1 to Pro-11 are compositionally biased toward pro residues. Residues Met-1–Lys-158 are disordered. 3 stretches are compositionally biased toward basic and acidic residues: residues Asn-36–Asn-45, Glu-111–Arg-135, and Lys-144–Lys-158. Transmembrane regions (helical) follow at residues Ile-222–Phe-242, Met-256–Ile-276, Gly-301–Leu-321, and Val-343–Pro-363.

The protein belongs to the TMEM237 family.

The protein resides in the membrane. It localises to the cell projection. Its subcellular location is the cilium. Component of the transition zone in primary cilia. Required for ciliogenesis. The chain is Transmembrane protein 237 homolog from Caenorhabditis elegans.